The sequence spans 355 residues: NADH dehydrogenase [ubiquinone] 1 alpha subcomplex subunit 10, mitochondrial (355 aa).

A mitochondrion-targeting transit peptide spans 1 to 35 (MALRLLKLAPASASARVVAAGAQRVRGIHSSVQCK). Ser-250 carries the post-translational modification Phosphoserine; by PINK1. Lys-285 carries the post-translational modification N6-succinyllysine.

This sequence belongs to the complex I NDUFA10 subunit family. As to quaternary structure, complex I is composed of 45 different subunits. This a component of the hydrophobic protein fraction. It depends on FAD as a cofactor. Phosphorylation at Ser-250 by PINK1 is required for the binding and/or reduction of the complex I substrate ubiquinone.

The protein localises to the mitochondrion matrix. In terms of biological role, accessory subunit of the mitochondrial membrane respiratory chain NADH dehydrogenase (Complex I), that is believed not to be involved in catalysis. Complex I functions in the transfer of electrons from NADH to the respiratory chain. The immediate electron acceptor for the enzyme is believed to be ubiquinone. In Pongo abelii (Sumatran orangutan), this protein is NADH dehydrogenase [ubiquinone] 1 alpha subcomplex subunit 10, mitochondrial (NDUFA10).